The following is a 217-amino-acid chain: Octanoyltransferase (217 aa).

The 176-residue stretch at 32–207 (SESPDELWIV…TFSQLLGYQH (176 aa)) folds into the BPL/LPL catalytic domain. Residues 71–78 (RGGQVTYH), 138–140 (SLG), and 151–153 (GLA) each bind substrate. C169 serves as the catalytic Acyl-thioester intermediate.

It belongs to the LipB family.

It is found in the cytoplasm. It catalyses the reaction octanoyl-[ACP] + L-lysyl-[protein] = N(6)-octanoyl-L-lysyl-[protein] + holo-[ACP] + H(+). It participates in protein modification; protein lipoylation via endogenous pathway; protein N(6)-(lipoyl)lysine from octanoyl-[acyl-carrier-protein]: step 1/2. Its function is as follows. Catalyzes the transfer of endogenously produced octanoic acid from octanoyl-acyl-carrier-protein onto the lipoyl domains of lipoate-dependent enzymes. Lipoyl-ACP can also act as a substrate although octanoyl-ACP is likely to be the physiological substrate. The chain is Octanoyltransferase from Shewanella sp. (strain W3-18-1).